The primary structure comprises 1200 residues: DNA polymerase subunit gamma-1 (1200 aa).

Disordered regions lie at residues 471–515 (QKKT…RPSM) and 667–688 (MDLS…SSEH). Residues 472–481 (KKTKISKKQK) are compositionally biased toward basic residues. Over residues 494-512 (LVEDHNEDPGPPTEKEESR) the composition is skewed to basic and acidic residues.

It belongs to the DNA polymerase type-A family. In terms of assembly, heterotrimer composed of a catalytic subunit and a homodimer of accessory subunits. Mg(2+) serves as cofactor.

The protein resides in the mitochondrion. It localises to the mitochondrion matrix. It is found in the mitochondrion nucleoid. It carries out the reaction DNA(n) + a 2'-deoxyribonucleoside 5'-triphosphate = DNA(n+1) + diphosphate. Its function is as follows. Involved in the replication of mitochondrial DNA. Associates with mitochondrial DNA. The polypeptide is DNA polymerase subunit gamma-1 (polg) (Xenopus laevis (African clawed frog)).